Reading from the N-terminus, the 888-residue chain is CRISPR-associated endonuclease/helicase Cas3 (888 aa).

An HD Cas3-type domain is found at 20–231 (KGNDIHLLIY…AGFCSLADWL (212 aa)). The Mg(2+) site is built by D75 and H160. Residues 301–504 (DALPVAPGLT…LDTYGLHTDP (204 aa)) form the Helicase ATP-binding domain. 314–321 (APTGSGKT) contributes to the ATP binding site. Positions 452–455 (DEVH) match the DEAH box motif. Positions 556-735 (MLERMIAAAN…AYRQWLDSIY (180 aa)) constitute a Helicase C-terminal domain.

This sequence in the N-terminal section; belongs to the CRISPR-associated nuclease Cas3-HD family. It in the central section; belongs to the CRISPR-associated helicase Cas3 family. As to quaternary structure, interacts with the CasA subunit of Cascade once Cascade has recognized target DNA. Requires Mg(2+) as cofactor.

Functionally, CRISPR (clustered regularly interspaced short palindromic repeat), is an adaptive immune system that provides protection against mobile genetic elements (viruses, transposable elements and conjugative plasmids). CRISPR clusters contain sequences complementary to antecedent mobile elements and target invading nucleic acids. CRISPR clusters are transcribed and processed into CRISPR RNA (crRNA). Cas3 plus Cascade participate in CRISPR interference, the third stage of CRISPR immunity. In terms of biological role, acts as an endonuclease, a 3'-5'exonuclease, and an ATP-dependent dsDNA helicase. Anneals and unwinds R-loops (in which crRNA binds the target DNA, displacing the noncomplementary strand). Unwinding requires ATP, annealing does not. Required along with the Cascade complex for resistance to bacteriophage lambda infection as well as the ability to cure CRISPR-encoding high-copy number plasmid. A Cas3-CasA fusion protein purified with the Cascade complex nicks target plasmid in the presence but not absence of Mg(2+), and degrades plasmid fully in the presence of Mg(2+) and ATP, suggesting the helicase activity is required for complete degradation. The polypeptide is CRISPR-associated endonuclease/helicase Cas3 (ygcB) (Escherichia coli (strain K12)).